Consider the following 426-residue polypeptide: Inhibin beta A chain (426 aa).

An N-terminal signal peptide occupies residues 1-20 (MPLLWLRGFLLASCWIIVRS). A propeptide spanning residues 21-310 (SPTPGSEGHS…EDHPHRRRRR (290 aa)) is cleaved from the precursor. A glycan (N-linked (GlcNAc...) asparagine) is linked at N165. The interval 259–288 (KKKKKEEEGEGKKKGGGEGGAGADEEKEQS) is disordered. Positions 263 to 274 (KEEEGEGKKKGG) are enriched in basic and acidic residues. 4 disulfide bridges follow: C314-C322, C321-C391, C350-C423, and C354-C425.

The protein belongs to the TGF-beta family. As to quaternary structure, dimeric, linked by one or more disulfide bonds. Inhibin A is a dimer of alpha/INHA and beta-A/INHBA. Activin A is a homodimer of beta-A/INHBA. Activin AB is a dimer of beta-A/INHBA and beta-B/INHBB. Interacts with FST and FSTL3; these interactions prevent activin A interaction to its type II receptor. Activin A interacts with ACVR2A. Activin A interacts with BMPR2. Inhibin A interacts with ACVR1; this interaction creates a non-signaling complex (NSC) that inhibits ACVR1-mediated BMP signaling. Inhibin A interacts with ACVR2A.

Its subcellular location is the secreted. Its function is as follows. Inhibins/activins are involved in regulating a number of diverse functions such as hypothalamic and pituitary hormone secretion, gonadal hormone secretion, germ cell development and maturation, erythroid differentiation, insulin secretion, nerve cell survival, embryonic axial development or bone growth, depending on their subunit composition. Activin A is a homodimer of INHBA that plays a role in several essential biological processes including embryonic development, stem cell maintenance and differentiation, haematopoiesis, cell proliferation and tissue fibrosis. Signals through type I (such as ACVR1B or ACVR1C) and type II receptors (such as ACVR2A, ACVR2B or BMPR2) which, upon ligand binding, phosphorylate SMAD2 and SMAD3 intracellular signaling mediators that form a complex with SMAD4, translocate to the nucleus and modulate gene expression. Can also activate alternative non-canonical intracellular signaling pathways including the p38 MAPK, extracellular signal-regulated kinases 1/2 (ERK1/2) and c-Jun N-terminal kinases (JNKs) to modulate cell migration and differentiation. Alternatively, promotes osteoblastic differentiation via ACVRL1-SMAD1/5/9 pathway. In addition, can engage the type I receptor ACVR1 to form an ACVR1-activin A-type II receptor non-signaling complex (NSC) that renders receptors unavailable for engagement with BMPs, hence resulting in an apparent inhibition of ACVR1-mediated BMP signaling. In terms of biological role, inhibin A is a dimer of alpha/INHA and beta-A/INHBA that functions as a feedback regulator in the hypothalamic-pituitary-gonadal (HPG) axis. Inhibits the secretion of FSH from the anterior pituitary gland by acting on pituitary gonadotrope cells. Antagonizes activin A by binding to the proteoglycan, betaglycan, and forming a stable complex with and, thereby, sequestering type II activin receptors while excluding type I receptor. The sequence is that of Inhibin beta A chain (INHBA) from Homo sapiens (Human).